The primary structure comprises 513 residues: MNLDSIHRLIEETQIFQMQQSSIKSRGDMVAPASPPRDTCNTCFPLHGLQSHAAHNFCAHSYNTNKWDICEELRLRELEEVKARAAQMEKTMRWWSDCTANWREKWSKVRAERNSAREEGRQLRIKLEMAMKELSTLKKKQSLPPQKEALEAKVTQDLKLPGFVEESCEHTDQFQLSSQMHESIREYLVKRQFSTKEDTNNKEQGVVIDSLKLSEEMKPNLDGVDLFNNGGSGNGETKTGLRLKAINLPLENEVTEISALQVHLDEFQKILWKEREMRTALEKEIERLESALSLWKWKYEELKESKPKNVKEFDILLGQHNDEMQELSGNIKEESKSQNSKDRVICELRAELERLQAENTSEWDKREILEREKQGLERENRRLKIQVKEMEELLDKKNRLSANSQSPDFKMSQIDLQEKNQELLNLQHAYYKLNRQYQANIAELTHANNRVDQNEAEVKKLRLRVEELKQGLNQKEDELDDSLNQIRKLQRSLDEEKERNENLETELRHLQNW.

The interval 1–217 (MNLDSIHRLI…IDSLKLSEEM (217 aa)) is required for centriolar localization and for interaction with CEP250, CROCC, LRRC45 and NEK2. Ser-21, Ser-22, Ser-34, Ser-135, Ser-142, Ser-194, and Ser-210 each carry phosphoserine. The stretch at 72-142 (ELRLRELEEV…ELSTLKKKQS (71 aa)) forms a coiled coil. 2 coiled-coil regions span residues 268-337 (QKIL…ESKS) and 363-513 (WDKR…LQNW). Residues Ser-401, Ser-404, and Ser-406 each carry the phosphoserine modification. The segment at 493 to 513 (LDEEKERNENLETELRHLQNW) is disordered.

As to quaternary structure, interacts (via N-terminus) with centriolar protein CEP250/CNAP1; the interaction results in recruitment of CCDC102B to the proximal ends of centrioles. Interacts (via N-terminus) with CROCC/rootletin and LRRC45. Interacts (via N-terminus) with serine/threonine-protein kinase NEK2; the interaction results in phosphorylation of CCDC102B. Post-translationally, phosphorylated directly or indirectly by NEK2 during mitosis which causes dissociation of CCDC102B from the centrosome and allows for centrosome separation.

Its subcellular location is the cytoplasm. The protein resides in the cytoskeleton. It is found in the microtubule organizing center. The protein localises to the centrosome. It localises to the centriole. In terms of biological role, during interphase, forms fibers at the proximal ends of centrioles to maintain centrosome cohesion. During mitosis, dissociates from the centrosome following phosphorylation to allow centrosome separation. Contributes to CROCC/rootletin filament formation. In Homo sapiens (Human), this protein is Coiled-coil domain-containing protein 102B (CCDC102B).